A 222-amino-acid chain; its full sequence is Small ribosomal subunit protein uS3 (222 aa).

Residues 39–109 enclose the KH type-2 domain; sequence IRNFVKKKVY…NILINIVEVK (71 aa).

The protein belongs to the universal ribosomal protein uS3 family. In terms of assembly, part of the 30S ribosomal subunit. Forms a tight complex with proteins S10 and S14.

In terms of biological role, binds the lower part of the 30S subunit head. Binds mRNA in the 70S ribosome, positioning it for translation. In Clostridium tetani (strain Massachusetts / E88), this protein is Small ribosomal subunit protein uS3.